Consider the following 153-residue polypeptide: Superoxide dismutase [Cu-Zn] (153 aa).

Histidine 45, histidine 47, and histidine 62 together coordinate Cu cation. Cysteine 56 and cysteine 145 are joined by a disulfide. 4 residues coordinate Zn(2+): histidine 62, histidine 70, histidine 79, and aspartate 82. A Cu cation-binding site is contributed by histidine 119.

The protein belongs to the Cu-Zn superoxide dismutase family. As to quaternary structure, homodimer. Cu cation serves as cofactor. Zn(2+) is required as a cofactor.

Its subcellular location is the cytoplasm. It carries out the reaction 2 superoxide + 2 H(+) = H2O2 + O2. Its function is as follows. Destroys radicals which are normally produced within the cells and which are toxic to biological systems. The sequence is that of Superoxide dismutase [Cu-Zn] from Drosophila orena (Fruit fly).